An 85-amino-acid chain; its full sequence is Large ribosomal subunit protein bL27 (85 aa).

The disordered stretch occupies residues 1-22 (MAHKKAGGSTRNGRDSESKRLG).

This sequence belongs to the bacterial ribosomal protein bL27 family.

In Aliivibrio salmonicida (strain LFI1238) (Vibrio salmonicida (strain LFI1238)), this protein is Large ribosomal subunit protein bL27.